Consider the following 273-residue polypeptide: Glucosamine-6-phosphate deaminase (273 aa).

The Proton acceptor; for enolization step role is filled by aspartate 72. The For ring-opening step role is filled by aspartate 141. Histidine 143 acts as the Proton acceptor; for ring-opening step in catalysis. The For ring-opening step role is filled by glutamate 148.

It belongs to the glucosamine/galactosamine-6-phosphate isomerase family. As to quaternary structure, homohexamer.

Its subcellular location is the cytoplasm. The enzyme catalyses alpha-D-glucosamine 6-phosphate + H2O = beta-D-fructose 6-phosphate + NH4(+). It functions in the pathway nucleotide-sugar biosynthesis; UDP-N-acetyl-alpha-D-glucosamine biosynthesis; alpha-D-glucosamine 6-phosphate from D-fructose 6-phosphate: step 1/1. Functionally, catalyzes the reversible conversion of alpha-D-glucosamine 6-phosphate (GlcN-6P) into beta-D-fructose 6-phosphate (Fru-6P) and ammonium ion, a regulatory reaction step in de novo uridine diphosphate-N-acetyl-alpha-D-glucosamine (UDP-GlcNAc) biosynthesis via hexosamine pathway. This Drosophila melanogaster (Fruit fly) protein is Glucosamine-6-phosphate deaminase.